We begin with the raw amino-acid sequence, 780 residues long: E3 UFM1-protein ligase 1 homolog (780 aa).

Polar residues predominate over residues 403 to 413 (STSSTNPNHST). Disordered stretches follow at residues 403–458 (STSS…RSHI) and 734–760 (SSDK…NIDL). 2 stretches are compositionally biased toward basic and acidic residues: residues 443-458 (KDRS…RSHI) and 736-750 (DKQK…KDSD).

The protein belongs to the UFL1 family.

In terms of biological role, E3 UFM1-protein ligase that mediates ufmylation of target proteins. This Trichoplax adhaerens (Trichoplax reptans) protein is E3 UFM1-protein ligase 1 homolog.